A 367-amino-acid polypeptide reads, in one-letter code: Peptide chain release factor 2 (367 aa).

Gln254 carries the N5-methylglutamine modification.

This sequence belongs to the prokaryotic/mitochondrial release factor family. Post-translationally, methylated by PrmC. Methylation increases the termination efficiency of RF2.

It is found in the cytoplasm. Functionally, peptide chain release factor 2 directs the termination of translation in response to the peptide chain termination codons UGA and UAA. The polypeptide is Peptide chain release factor 2 (Neisseria meningitidis serogroup C / serotype 2a (strain ATCC 700532 / DSM 15464 / FAM18)).